The primary structure comprises 436 residues: MLGVKGNYLLPADCAHRLVAELQGALDSCADRQRQLERSLRVSRRLLQVWEPARTPSPVPETKEEDPSPACAPSSQDLEELELLTQALEKAVRVRKGVSNAGQRDRTPTLTSKAATSGAAAASHPRAPSRGGSRVLGTRSTKGIQRATAPPKDYPEHRLRSKGDKTHVRTQDQTTGYGPDLRDQQMTPSSAHHTTELFALKEKGTLLQLPEDFRKAVSRNSCLWAQLNSARTNDSTDATRAAKTQFLHKLQMASGCSSHRPSATEVEAHARILRKACMLLRLRMQKELAIAPTDWMQEYRCLLTLEGLQTVVGQCLHRIQVLQAAVTEQLPGECLAETRTQASSVCGGEVDSACSPELLLYASTEELQTLATLKLQVALLHQQIHLEKVLMAELLPLINTQDPGGPPWLALCRAAYSLLCEGGERFLTVLRDDPAD.

Disordered regions lie at residues 53–76 (ARTP…PSSQ) and 94–191 (VRKG…PSSA). Residues 111 to 131 (TSKAATSGAAAASHPRAPSRG) are compositionally biased toward low complexity. A compositionally biased stretch (basic and acidic residues) spans 153 to 170 (DYPEHRLRSKGDKTHVRT). Ser161 carries the post-translational modification Phosphoserine.

In terms of assembly, interacts with TEDC1. Found in a complex with TEDC1, TEDC2, TUBE1 and TUBD1.

Its subcellular location is the cell projection. The protein resides in the cilium. The protein localises to the cytoplasm. It is found in the cytoskeleton. It localises to the microtubule organizing center. Its subcellular location is the centrosome. The protein resides in the centriole. Acts as a positive regulator of ciliary hedgehog signaling. Required for centriole stability. The protein is Tubulin epsilon and delta complex protein 2 of Mus musculus (Mouse).